Reading from the N-terminus, the 245-residue chain is Ribonuclease 3 (245 aa).

The RNase III domain occupies 19–144 (ASILEERTGH…LIATIYLDGG (126 aa)). Glu-57 contacts Mg(2+). Residue Asp-61 is part of the active site. Residues Asp-130 and Glu-133 each contribute to the Mg(2+) site. The active site involves Glu-133. The DRBM domain maps to 169-238 (DAKTELQEWA…AEAMLYREGV (70 aa)).

This sequence belongs to the ribonuclease III family. Homodimer. Mg(2+) serves as cofactor.

It is found in the cytoplasm. The enzyme catalyses Endonucleolytic cleavage to 5'-phosphomonoester.. Digests double-stranded RNA. Involved in the processing of primary rRNA transcript to yield the immediate precursors to the large and small rRNAs (23S and 16S). Processes some mRNAs, and tRNAs when they are encoded in the rRNA operon. Processes pre-crRNA and tracrRNA of type II CRISPR loci if present in the organism. This Brucella abortus (strain S19) protein is Ribonuclease 3.